The primary structure comprises 276 residues: Monoglyceride lipase homolog (276 aa).

It belongs to the orthopoxvirus OPG043 family.

The sequence is that of Monoglyceride lipase homolog (OPG043) from Cynomys gunnisoni (Gunnison's prairie dog).